Consider the following 396-residue polypeptide: Elongation factor Tu (396 aa).

Residues 10–205 form the tr-type G domain; sequence KPHVNIGTIG…AVDESIPDPV (196 aa). Residues 19 to 26 are G1; the sequence is GHVDHGKT. 19-26 is a binding site for GTP; sequence GHVDHGKT. Threonine 26 lines the Mg(2+) pocket. The tract at residues 62–66 is G2; that stretch reads GITIN. The tract at residues 83–86 is G3; sequence DAPG. GTP contacts are provided by residues 83-87 and 138-141; these read DAPGH and NKAD. Residues 138 to 141 form a G4 region; it reads NKAD. The G5 stretch occupies residues 175 to 177; the sequence is SAL.

It belongs to the TRAFAC class translation factor GTPase superfamily. Classic translation factor GTPase family. EF-Tu/EF-1A subfamily. In terms of assembly, monomer.

The protein localises to the cytoplasm. It catalyses the reaction GTP + H2O = GDP + phosphate + H(+). GTP hydrolase that promotes the GTP-dependent binding of aminoacyl-tRNA to the A-site of ribosomes during protein biosynthesis. The sequence is that of Elongation factor Tu from Mycolicibacterium gilvum (strain PYR-GCK) (Mycobacterium gilvum (strain PYR-GCK)).